The sequence spans 823 residues: ATM interactor (823 aa).

The interval Gly-28–Glu-67 is disordered. The segment covering Pro-49 to Ala-59 has biased composition (low complexity). The C2H2-type 1 zinc finger occupies Ile-84–His-109. The C2H2-type 2; degenerate zinc-finger motif lies at His-165–Ala-184. Positions His-214 to Ser-225 are enriched in basic and acidic residues. 3 disordered regions span residues His-214–Ala-234, Glu-268–Arg-289, and Arg-610–Ile-634. The tract at residues Pro-223–Gln-442 is required for formation of RAD51 foci. Composition is skewed to polar residues over residues Cys-275 to Thr-286 and Leu-613 to Ala-629.

Interacts via its C-terminus with ATM. Interacts with DYNLL1; this interaction inhibits ATMIN transcriptional activity and hence may play a role in a feedback loop whereby DYNLL1 inhibits transactivation of its own promoter by ATMIN. In terms of tissue distribution, ubiquitously expressed in normal tissues and cancer cell lines with highest levels in placenta and skeletal muscle.

Its subcellular location is the nucleus. Functionally, transcription factor. Plays a crucial role in cell survival and RAD51 foci formation in response to methylating DNA damage. Involved in regulating the activity of ATM in the absence of DNA damage. May play a role in stabilizing ATM. Binds to the DYNLL1 promoter and activates its transcription. This is ATM interactor (ATMIN) from Homo sapiens (Human).